The following is a 570-amino-acid chain: Sulfite reductase [NADPH] hemoprotein beta-component (570 aa).

Residues Cys-434, Cys-440, Cys-479, and Cys-483 each contribute to the [4Fe-4S] cluster site. Cys-483 contributes to the siroheme binding site.

This sequence belongs to the nitrite and sulfite reductase 4Fe-4S domain family. Alpha(8)-beta(8). The alpha component is a flavoprotein, the beta component is a hemoprotein. It depends on siroheme as a cofactor. Requires [4Fe-4S] cluster as cofactor.

The catalysed reaction is hydrogen sulfide + 3 NADP(+) + 3 H2O = sulfite + 3 NADPH + 4 H(+). It participates in sulfur metabolism; hydrogen sulfide biosynthesis; hydrogen sulfide from sulfite (NADPH route): step 1/1. In terms of biological role, component of the sulfite reductase complex that catalyzes the 6-electron reduction of sulfite to sulfide. This is one of several activities required for the biosynthesis of L-cysteine from sulfate. The polypeptide is Sulfite reductase [NADPH] hemoprotein beta-component (Salmonella heidelberg (strain SL476)).